Consider the following 499-residue polypeptide: Lysine--tRNA ligase (499 aa).

Mg(2+)-binding residues include glutamate 408 and glutamate 415.

This sequence belongs to the class-II aminoacyl-tRNA synthetase family. Homodimer. Mg(2+) is required as a cofactor.

It localises to the cytoplasm. The enzyme catalyses tRNA(Lys) + L-lysine + ATP = L-lysyl-tRNA(Lys) + AMP + diphosphate. The sequence is that of Lysine--tRNA ligase from Bacillus thuringiensis (strain Al Hakam).